The chain runs to 382 residues: N-acetyldiaminopimelate deacetylase (382 aa).

Asp73 is an active-site residue. Residue Glu132 is the Proton acceptor of the active site.

This sequence belongs to the peptidase M20A family. N-acetyldiaminopimelate deacetylase subfamily.

The catalysed reaction is N-acetyl-(2S,6S)-2,6-diaminopimelate + H2O = (2S,6S)-2,6-diaminopimelate + acetate. It participates in amino-acid biosynthesis; L-lysine biosynthesis via DAP pathway; LL-2,6-diaminopimelate from (S)-tetrahydrodipicolinate (acetylase route): step 3/3. Functionally, catalyzes the conversion of N-acetyl-diaminopimelate to diaminopimelate and acetate. The sequence is that of N-acetyldiaminopimelate deacetylase from Oenococcus oeni (strain ATCC BAA-331 / PSU-1).